The following is a 417-amino-acid chain: Serine--tRNA ligase (417 aa).

Residue 232 to 234 (TSE) participates in L-serine binding. 263–265 (RKE) serves as a coordination point for ATP. An L-serine-binding site is contributed by Glu286. 350–353 (EISS) contributes to the ATP binding site. Residue Ser385 coordinates L-serine.

The protein belongs to the class-II aminoacyl-tRNA synthetase family. Type-1 seryl-tRNA synthetase subfamily. As to quaternary structure, homodimer. The tRNA molecule binds across the dimer.

It localises to the cytoplasm. It catalyses the reaction tRNA(Ser) + L-serine + ATP = L-seryl-tRNA(Ser) + AMP + diphosphate + H(+). The catalysed reaction is tRNA(Sec) + L-serine + ATP = L-seryl-tRNA(Sec) + AMP + diphosphate + H(+). It participates in aminoacyl-tRNA biosynthesis; selenocysteinyl-tRNA(Sec) biosynthesis; L-seryl-tRNA(Sec) from L-serine and tRNA(Sec): step 1/1. Its function is as follows. Catalyzes the attachment of serine to tRNA(Ser). Is also able to aminoacylate tRNA(Sec) with serine, to form the misacylated tRNA L-seryl-tRNA(Sec), which will be further converted into selenocysteinyl-tRNA(Sec). This Campylobacter hominis (strain ATCC BAA-381 / DSM 21671 / CCUG 45161 / LMG 19568 / NCTC 13146 / CH001A) protein is Serine--tRNA ligase.